The primary structure comprises 92 residues: UPF0223 protein SUB0967 (92 aa).

The protein belongs to the UPF0223 family.

The chain is UPF0223 protein SUB0967 from Streptococcus uberis (strain ATCC BAA-854 / 0140J).